A 53-amino-acid chain; its full sequence is Minor histocompatibility protein HMSD variant form (53 aa).

ACC-6 forms a complex with MHC HLA-B*4403. As to expression, highly expressed in dendritic cells and primary leukemia cells, especially those of myeloid lineage. ACC-6 expression is limited to cells of the hematopoietic lineage.

This splice variant of HMSD is the precursor of the histocompatibility antigen ACC-6. More generally, minor histocompatibility antigens (mHags) refer to immunogenic peptide which, when complexed with MHC, can generate an immune response after recognition by specific T-cells. The peptides are derived from polymorphic intracellular proteins, which are cleaved by normal pathways of antigen processing. The binding of these peptides to MHC class I or class II molecules and its expression on the cell surface can stimulate T-cell responses and thereby trigger graft rejection or graft-versus-host disease (GVHD) after hematopoietic stem cell transplantation from HLA-identical sibling donor. GVHD is a frequent complication after bone marrow transplantation (BMT), due to mismatch of minor histocompatibility antigen in HLA-matched sibling marrow transplants. However, associated with GVHD, a favorable graft-versus-leukemia (GVL) can be induced by donor-recipient disparities in mHags. ACC-6 is presented to the cell surface by MHC HLA-B*4403. This complex specifically elicits donor-cytotoxic T-lymphocyte (CTL) reactivity against hematologic malignancies after treatment by HLA-identical allogenic BMT. It induces cell recognition and lysis by CTL. Immunogenicity of most autosomal mHags results from single-nucleotide polymorphisms that cause amino-acid substitutions within epitopes, leading to the differential recognition of peptides between donor and recipient. This chain is Minor histocompatibility protein HMSD variant form (HMSD), found in Homo sapiens (Human).